A 447-amino-acid polypeptide reads, in one-letter code: Gamma-glutamyl phosphate reductase (447 aa).

The protein belongs to the gamma-glutamyl phosphate reductase family.

The protein resides in the cytoplasm. The catalysed reaction is L-glutamate 5-semialdehyde + phosphate + NADP(+) = L-glutamyl 5-phosphate + NADPH + H(+). Its pathway is amino-acid biosynthesis; L-proline biosynthesis; L-glutamate 5-semialdehyde from L-glutamate: step 2/2. Its function is as follows. Catalyzes the NADPH-dependent reduction of L-glutamate 5-phosphate into L-glutamate 5-semialdehyde and phosphate. The product spontaneously undergoes cyclization to form 1-pyrroline-5-carboxylate. In Methanosarcina mazei (strain ATCC BAA-159 / DSM 3647 / Goe1 / Go1 / JCM 11833 / OCM 88) (Methanosarcina frisia), this protein is Gamma-glutamyl phosphate reductase.